We begin with the raw amino-acid sequence, 102 residues long: NADH-quinone oxidoreductase subunit K (102 aa).

3 helical membrane passes run 5-25 (LGHFLSLGAMLFALSVIGIFL), 31-51 (IVLLMAIELMLLAVNMNFVAF), and 62-82 (VFVFFILTVAAAESAIGLAIL).

It belongs to the complex I subunit 4L family. As to quaternary structure, NDH-1 is composed of 14 different subunits. Subunits NuoA, H, J, K, L, M, N constitute the membrane sector of the complex.

The protein localises to the cell inner membrane. The catalysed reaction is a quinone + NADH + 5 H(+)(in) = a quinol + NAD(+) + 4 H(+)(out). Functionally, NDH-1 shuttles electrons from NADH, via FMN and iron-sulfur (Fe-S) centers, to quinones in the respiratory chain. The immediate electron acceptor for the enzyme in this species is believed to be ubiquinone. Couples the redox reaction to proton translocation (for every two electrons transferred, four hydrogen ions are translocated across the cytoplasmic membrane), and thus conserves the redox energy in a proton gradient. The sequence is that of NADH-quinone oxidoreductase subunit K from Paracidovorax citrulli (strain AAC00-1) (Acidovorax citrulli).